A 447-amino-acid polypeptide reads, in one-letter code: Argininosuccinate synthase (447 aa).

ATP contacts are provided by residues 17–25 (AFSGGLDTS) and Ala-43. Tyr-99 lines the L-citrulline pocket. ATP is bound by residues Gly-129 and Thr-131. Residues Thr-131, Asn-135, and Asp-136 each contribute to the L-aspartate site. Asn-135 provides a ligand contact to L-citrulline. Asp-136 is a binding site for ATP. L-citrulline-binding residues include Arg-139 and Ser-192. Residue Asp-194 participates in ATP binding. Residues Thr-201, Glu-203, and Glu-280 each coordinate L-citrulline.

The protein belongs to the argininosuccinate synthase family. Type 2 subfamily. Homotetramer.

It localises to the cytoplasm. The catalysed reaction is L-citrulline + L-aspartate + ATP = 2-(N(omega)-L-arginino)succinate + AMP + diphosphate + H(+). It functions in the pathway amino-acid biosynthesis; L-arginine biosynthesis; L-arginine from L-ornithine and carbamoyl phosphate: step 2/3. This chain is Argininosuccinate synthase, found in Salmonella heidelberg (strain SL476).